Here is a 453-residue protein sequence, read N- to C-terminus: Serine incorporator 1 (453 aa).

Gly2 carries N-myristoyl glycine lipidation. Topologically, residues Gly2–Arg39 are cytoplasmic. Residues Leu40–Gly60 traverse the membrane as a helical segment. At Met61–Lys88 the chain is on the lumenal side. A helical transmembrane segment spans residues Ala89–Ile109. The Cytoplasmic segment spans residues Lys110–Asn123. The chain crosses the membrane as a helical span at residues Gly124–Pro144. At Glu145–Val151 the chain is on the lumenal side. The chain crosses the membrane as a helical span at residues Trp152–Ile172. Residues Asp173–Ala197 lie on the Cytoplasmic side of the membrane. The helical transmembrane segment at Leu198–Val218 threads the bilayer. Topologically, residues Tyr219–Ala231 are lumenal. A helical transmembrane segment spans residues Phe232 to Ile252. The Cytoplasmic segment spans residues Gln253 to Ser259. A helical membrane pass occupies residues Gly260–Thr280. Residues Asn281–Ser309 are Lumenal-facing. Residues Val310 to Tyr330 form a helical membrane-spanning segment. Residues Ser331–Ser387 lie on the Cytoplasmic side of the membrane. Residue Ser351 is modified to Phosphoserine. Thr352 is subject to Phosphothreonine. Phosphoserine is present on residues Ser361 and Ser364. The helical transmembrane segment at Phe388–Tyr408 threads the bilayer. At Arg409–Lys426 the chain is on the lumenal side. A helical transmembrane segment spans residues Ile427 to Leu447. The Cytoplasmic segment spans residues Thr448–Asp453.

This sequence belongs to the TDE1 family. As to quaternary structure, interacts with SPTLC1.

It localises to the endoplasmic reticulum membrane. Enhances the incorporation of serine into phosphatidylserine and sphingolipids. The protein is Serine incorporator 1 (SERINC1) of Pongo abelii (Sumatran orangutan).